The primary structure comprises 446 residues: Probable beta-1,4-xylosyltransferase IRX9L (446 aa).

Positions 1–26 are disordered; that stretch reads MSRRNAGAMQREGSVKDWEEFDPSPS. At 1–85 the chain is on the cytoplasmic side; the sequence is MSRRNAGAMQ…SRSKGMSLKR (85 aa). Residues 86-106 form a helical; Signal-anchor for type II membrane protein membrane-spanning segment; the sequence is AMLQLLVCFMVGIFIGFTPPF. The Lumenal portion of the chain corresponds to 107 to 446; it reads SVDLPGKIAS…RNLDAVVPIT (340 aa). 4 N-linked (GlcNAc...) asparagine glycosylation sites follow: asparagine 185, asparagine 258, asparagine 361, and asparagine 411.

This sequence belongs to the glycosyltransferase 43 family.

It localises to the golgi apparatus membrane. In terms of biological role, probable beta-1,4-xylosyltransferase involved in xylan biosynthesis in cell walls. The chain is Probable beta-1,4-xylosyltransferase IRX9L from Oryza sativa subsp. japonica (Rice).